The primary structure comprises 229 residues: Urease accessory protein UreF (229 aa).

This sequence belongs to the UreF family. UreD, UreF and UreG form a complex that acts as a GTP-hydrolysis-dependent molecular chaperone, activating the urease apoprotein by helping to assemble the nickel containing metallocenter of UreC. The UreE protein probably delivers the nickel.

The protein localises to the cytoplasm. Functionally, required for maturation of urease via the functional incorporation of the urease nickel metallocenter. This chain is Urease accessory protein UreF, found in Staphylococcus aureus (strain MRSA252).